Here is a 315-residue protein sequence, read N- to C-terminus: MASGNLTWVTEFILVGVSDDPELQIPLFLVFLVLYLLTVAGNLGIITLTSVDPQLQTPMYFFLRHLAIINLCNSTVVAPKMLVNFLVTKKTISYYGCAAQLGGFLVFIVAEIFTLAAMAYDRYVAIWSPLLYAVVVSPKVCRLLVSLTYLQSLITALTVSSCVFSVSYCSSNIINHFYCDDVPLLALSCSDTYIPETAVFIFSGTNLLFSMIVVLISYFNIVITILRIRSSEGRQKAFSTCASHMIAVVVFYGTLLFMYLQPRSNHSLDTDKMASVFYTLVIPVLNPLIYSLRNKNVKDALKRFLDNPCRSLKLM.

The Extracellular segment spans residues 1–24; the sequence is MASGNLTWVTEFILVGVSDDPELQ. An N-linked (GlcNAc...) asparagine glycan is attached at N5. A helical membrane pass occupies residues 25-45; that stretch reads IPLFLVFLVLYLLTVAGNLGI. At 46 to 57 the chain is on the cytoplasmic side; the sequence is ITLTSVDPQLQT. Residues 58-78 form a helical membrane-spanning segment; that stretch reads PMYFFLRHLAIINLCNSTVVA. Residues 79 to 97 lie on the Extracellular side of the membrane; sequence PKMLVNFLVTKKTISYYGC. C97 and C179 are joined by a disulfide. The helical transmembrane segment at 98–118 threads the bilayer; sequence AAQLGGFLVFIVAEIFTLAAM. Residues 119-143 are Cytoplasmic-facing; it reads AYDRYVAIWSPLLYAVVVSPKVCRL. The chain crosses the membrane as a helical span at residues 144 to 164; the sequence is LVSLTYLQSLITALTVSSCVF. The Extracellular portion of the chain corresponds to 165–205; that stretch reads SVSYCSSNIINHFYCDDVPLLALSCSDTYIPETAVFIFSGT. Residues 206 to 226 form a helical membrane-spanning segment; it reads NLLFSMIVVLISYFNIVITIL. Residues 227–239 lie on the Cytoplasmic side of the membrane; sequence RIRSSEGRQKAFS. Residues 240–260 traverse the membrane as a helical segment; that stretch reads TCASHMIAVVVFYGTLLFMYL. Residues 261-271 are Extracellular-facing; sequence QPRSNHSLDTD. N265 carries N-linked (GlcNAc...) asparagine glycosylation. A helical membrane pass occupies residues 272–292; that stretch reads KMASVFYTLVIPVLNPLIYSL. Over 293 to 315 the chain is Cytoplasmic; the sequence is RNKNVKDALKRFLDNPCRSLKLM.

This sequence belongs to the G-protein coupled receptor 1 family.

It localises to the membrane. Odorant receptor. The chain is Olfactory receptor 8J2 (OR8J2) from Homo sapiens (Human).